Reading from the N-terminus, the 245-residue chain is Ureidoacrylate amidohydrolase RutB (245 aa).

The Proton acceptor role is filled by Asp-41. Lys-150 is a catalytic residue. The Nucleophile role is filled by Cys-183.

Belongs to the isochorismatase family. RutB subfamily.

It catalyses the reaction (Z)-3-ureidoacrylate + H2O + H(+) = (Z)-3-aminoacrylate + NH4(+) + CO2. It carries out the reaction (Z)-3-ureidoacrylate + H2O = (Z)-3-aminoacrylate + carbamate + H(+). The enzyme catalyses (Z)-2-methylureidoacrylate + H2O + H(+) = (Z)-2-methylaminoacrylate + NH4(+) + CO2. Hydrolyzes ureidoacrylate to form aminoacrylate and carbamate. The carbamate hydrolyzes spontaneously, thereby releasing one of the nitrogen atoms of the pyrimidine ring as ammonia and one of its carbon atoms as CO2. The chain is Ureidoacrylate amidohydrolase RutB from Pseudomonas syringae pv. syringae (strain B728a).